The primary structure comprises 969 residues: RNA polymerase-associated protein RapA (969 aa).

One can recognise a Helicase ATP-binding domain in the interval 164–334; it reads EVGRRHAPRV…FARLRLLDPD (171 aa). 177–184 serves as a coordination point for ATP; the sequence is DEVGLGKT. The DEAH box motif lies at 280–283; that stretch reads DEAH. Positions 492-679 constitute a Helicase C-terminal domain; it reads RVNWLIEKIQ…ESAKLNQSLK (188 aa).

Belongs to the SNF2/RAD54 helicase family. RapA subfamily. In terms of assembly, interacts with the RNAP. Has a higher affinity for the core RNAP than for the holoenzyme. Its ATPase activity is stimulated by binding to RNAP.

Its function is as follows. Transcription regulator that activates transcription by stimulating RNA polymerase (RNAP) recycling in case of stress conditions such as supercoiled DNA or high salt concentrations. Probably acts by releasing the RNAP, when it is trapped or immobilized on tightly supercoiled DNA. Does not activate transcription on linear DNA. Probably not involved in DNA repair. The protein is RNA polymerase-associated protein RapA of Vibrio atlanticus (strain LGP32) (Vibrio splendidus (strain Mel32)).